A 759-amino-acid chain; its full sequence is NADP-dependent malic enzyme (759 aa).

The segment at 1–428 (MDDQLKQSAL…KLTEFVYKTN (428 aa)) is malic enzyme. Tyrosine 39 functions as the Proton donor in the catalytic mechanism. At lysine 56 the chain carries N6-acetyllysine. Lysine 94 serves as the catalytic Proton acceptor. 3 residues coordinate a divalent metal cation: glutamate 136, aspartate 137, and aspartate 162. Residues 195–198 (AGAA), asparagine 288, and asparagine 320 contribute to the NADP(+) site. The segment at 429–759 (LFMKPIFSQA…AVVEAQTQPL (331 aa)) is phosphate acetyltransferase; required for oligomerization, inhibition by acetyl-CoA and activation by glutamate, aspartate, and glucose-6-phosphate.

It in the N-terminal section; belongs to the malic enzymes family. In the C-terminal section; belongs to the phosphate acetyltransferase and butyryltransferase family. Homooligomer, possibly an octamer. Mg(2+) serves as cofactor. The cofactor is Mn(2+).

It catalyses the reaction (S)-malate + NADP(+) = pyruvate + CO2 + NADPH. It carries out the reaction oxaloacetate + H(+) = pyruvate + CO2. Its activity is regulated as follows. Inhibited by 4 mM Mg(2+) and acetyl-CoA, competitively inhibited by fumarate and oxaloacetate. Activated by glutamate and aspartate, glucose-6-phosphate, acetyl-phosphate and 2 mM KCl. Its function is as follows. Catalyzes the decarboxylation of malate to pyruvate. In vitro, shows malolactic enzyme activity in the presence of NADPH. However, it is unlikely that this activity is of relevance in E.coli, which produces little NADPH. This chain is NADP-dependent malic enzyme (maeB), found in Escherichia coli (strain K12).